The sequence spans 149 residues: MNVFLSKYINGVDKKSRVTVPANYRAVLGKELFNGVIAYPSIRNNCIEVCGIAHIEKLRKMIETLDPYSEERDAFETMIFGEAVQLAFDGEGRIILPQSLMKHADIEEQACFVGKGIIFEIWQPQNFEKYLSYAQNIAHEKRLTLRNVH.

SpoVT-AbrB domains are found at residues 7–54 (KYIN…GIAH) and 83–126 (AVQL…QPQN).

This sequence belongs to the MraZ family. In terms of assembly, forms oligomers.

The protein resides in the cytoplasm. The protein localises to the nucleoid. The polypeptide is Transcriptional regulator MraZ (Rickettsia typhi (strain ATCC VR-144 / Wilmington)).